The chain runs to 117 residues: Immunoglobulin lambda variable 1-47 (117 aa).

The N-terminal stretch at 1–19 is a signal peptide; sequence MAGFPLLLTLLTHCAGSWA. Glutamine 20 bears the Pyrrolidone carboxylic acid mark. Residues 20 to 44 form a framework-1 region; sequence QSVLTQPPSASGTPGQRVTISCSGS. Residues 20 to 117 form the Ig-like domain; sequence QSVLTQPPSA…CAAWDDSLSG (98 aa). Cysteine 41 and cysteine 108 form a disulfide bridge. Residues 45–52 form a complementarity-determining-1 region; that stretch reads SSNIGSNY. The interval 53-69 is framework-2; that stretch reads VYWYQQLPGTAPKLLIY. The tract at residues 70 to 72 is complementarity-determining-2; that stretch reads SNN. A framework-3 region spans residues 73 to 108; sequence QRPSGVPDRFSGSKSGTSASLAISGLRSEDEADYYC. The complementarity-determining-3 stretch occupies residues 109-117; it reads AAWDDSLSG.

As to quaternary structure, immunoglobulins are composed of two identical heavy chains and two identical light chains; disulfide-linked.

The protein localises to the secreted. It localises to the cell membrane. Functionally, v region of the variable domain of immunoglobulin light chains that participates in the antigen recognition. Immunoglobulins, also known as antibodies, are membrane-bound or secreted glycoproteins produced by B lymphocytes. In the recognition phase of humoral immunity, the membrane-bound immunoglobulins serve as receptors which, upon binding of a specific antigen, trigger the clonal expansion and differentiation of B lymphocytes into immunoglobulins-secreting plasma cells. Secreted immunoglobulins mediate the effector phase of humoral immunity, which results in the elimination of bound antigens. The antigen binding site is formed by the variable domain of one heavy chain, together with that of its associated light chain. Thus, each immunoglobulin has two antigen binding sites with remarkable affinity for a particular antigen. The variable domains are assembled by a process called V-(D)-J rearrangement and can then be subjected to somatic hypermutations which, after exposure to antigen and selection, allow affinity maturation for a particular antigen. The protein is Immunoglobulin lambda variable 1-47 of Homo sapiens (Human).